The following is a 68-amino-acid chain: Large ribosomal subunit protein bL35 (68 aa).

Belongs to the bacterial ribosomal protein bL35 family.

This chain is Large ribosomal subunit protein bL35, found in Fusobacterium nucleatum subsp. nucleatum (strain ATCC 25586 / DSM 15643 / BCRC 10681 / CIP 101130 / JCM 8532 / KCTC 2640 / LMG 13131 / VPI 4355).